Here is a 145-residue protein sequence, read N- to C-terminus: Cell division protein SepF (145 aa).

The disordered stretch occupies residues Asp21–Pro41. A compositionally biased stretch (basic and acidic residues) spans Pro23–Pro41.

It belongs to the SepF family. As to quaternary structure, homodimer. Interacts with FtsZ.

The protein resides in the cytoplasm. Functionally, cell division protein that is part of the divisome complex and is recruited early to the Z-ring. Probably stimulates Z-ring formation, perhaps through the cross-linking of FtsZ protofilaments. Its function overlaps with FtsA. The protein is Cell division protein SepF of Caldicellulosiruptor saccharolyticus (strain ATCC 43494 / DSM 8903 / Tp8T 6331).